The chain runs to 341 residues: Anthranilate phosphoribosyltransferase (341 aa).

Residues Gly-80, 83-84, Thr-88, 90-93, 108-116, and Ser-120 contribute to the 5-phospho-alpha-D-ribose 1-diphosphate site; these read GD, NIST, and KHGNYSVSS. Gly-80 is a binding site for anthranilate. Ser-92 is a Mg(2+) binding site. Asn-111 lines the anthranilate pocket. Arg-166 is an anthranilate binding site. Residues Asp-224 and Glu-225 each contribute to the Mg(2+) site.

It belongs to the anthranilate phosphoribosyltransferase family. As to quaternary structure, homodimer. It depends on Mg(2+) as a cofactor.

The enzyme catalyses N-(5-phospho-beta-D-ribosyl)anthranilate + diphosphate = 5-phospho-alpha-D-ribose 1-diphosphate + anthranilate. It functions in the pathway amino-acid biosynthesis; L-tryptophan biosynthesis; L-tryptophan from chorismate: step 2/5. Catalyzes the transfer of the phosphoribosyl group of 5-phosphorylribose-1-pyrophosphate (PRPP) to anthranilate to yield N-(5'-phosphoribosyl)-anthranilate (PRA). The chain is Anthranilate phosphoribosyltransferase from Haloquadratum walsbyi (strain DSM 16790 / HBSQ001).